We begin with the raw amino-acid sequence, 880 residues long: 3-isopropylmalate dehydratase large subunit gloJ (880 aa).

3 residues coordinate [4Fe-4S] cluster: cysteine 457, cysteine 520, and cysteine 523.

The protein belongs to the aconitase/IPM isomerase family. LeuC type 2 subfamily. It depends on [4Fe-4S] cluster as a cofactor.

The enzyme catalyses (2R,3S)-3-isopropylmalate = (2S)-2-isopropylmalate. It functions in the pathway mycotoxin biosynthesis. In terms of biological role, 3-isopropylmalate dehydratase large subunit; part of the gene cluster that mediates the biosynthesis of pneumocandins, lipohexapeptides of the echinocandin family that prevent fungal cell wall formation by non-competitive inhibition of beta-1,3-glucan synthase. The 10,12-dimethylmyristoyl side chain is synthesized by the reducing polyketide synthase gloL/GLPKS4. The thioesterase gloN/GLHYD exclusively interacts with gloL/GLPKS4 to maintain turnover of the polyketide side chain. The 10R,12S-dimethylmyristic acid is then transferred to the first thiolation domain of the nonribosomal peptide synthetase gloA/GLNRPS4 by the acyl-AMP ligase gloD/GLligase, followed by its acylation to L-ornithine to trigger elongation of the cyclic hexapeptide. L-ornithine, 4R-hydroxyl-L-proline (generated from L-proline by the dioxygenase gloF/GLOXY2), 3S-hydroxyl-L-homotyrosine (generated by gloG/GLHtyB, gloH/GLHtyA, gloI/GLHtyC, gloJ/GLHtyD and hydroxylated at C-3 by the dioxygenase gloM/GLOXY1), 3R-hydroxyl-L-glutamine (generated from L-glutamine probably by the dioxygenase gloE/GLOXY3) and 3S-hydroxyl-L-proline (generated from L-proline by the dioxygenase gloF/GLOXY2 to yield pneumocandin B0), or 3S-hydroxyl-4S-methyl-L-proline (generated from L-leucine by the dioxygenase gloC/GLOXY4 to yield pneumocandin A0) are sequentially added to the growing chain. The last C domain of gloA/GLNRPS4 is proposed to be responsible for cyclization by condensation to form the peptide bond between L-ornithine and 3S-hydroxyl-4S-methyl-L-proline (for pneumocandin A0) or 3S-hydroxyl-L-proline (for pneumocandin B0). Finally, the subsequent C-4 hydroxylation of 3S-hydroxyl-L-homotyrosine and L-ornithine dihydroxylation at C-4 and C-5 are performed by the cytochrome P450 monooxygenases gloP/GLP450-1 and gloO/GLP450-2, respectively. This is 3-isopropylmalate dehydratase large subunit gloJ from Glarea lozoyensis (strain ATCC 20868 / MF5171).